We begin with the raw amino-acid sequence, 1448 residues long: ABC transporter G family member 9 (1448 aa).

The segment covering 16 to 28 has biased composition (polar residues); the sequence is EGGSNLNINTPSG. Residues 16–41 are disordered; the sequence is EGGSNLNINTPSGMSDGDFNSGANSP. Residues 136–385 form the ABC transporter 1 domain; that stretch reads LFKPSTWKIE…FLDLGFDCEP (250 aa). Residues 490-717 form the ABC transmembrane type-2 1 domain; sequence WGDKFSLVSR…APYDNSVRVC (228 aa). The next 7 membrane-spanning stretches (helical) occupy residues 494-514, 530-550, 579-599, 604-624, 634-654, 663-683, and 748-768; these read FSLV…GSVF, AIFA…FATF, IPLT…MFGL, GKFF…TNMF, LYVS…YCGY, PWFG…ALMA, and LNIF…MVAV. The region spanning 822 to 1066 is the ABC transporter 2 domain; it reads FTWENIKYTV…LTSYFERQGV (245 aa). Position 858–865 (858–865) interacts with ATP; that stretch reads GSSGAGKT. 6 helical membrane-spanning segments follow: residues 1157-1177, 1191-1211, 1233-1253, 1272-1292, 1299-1319, and 1422-1442; these read FYAY…GFTF, IFFI…VMVQ, FAIS…SVFF, FYFW…GGAI, MFLA…FCGV, and IAIL…FVYL. Residues 1157–1389 enclose the ABC transmembrane type-2 2 domain; it reads FYAYGSILQA…VPATGYVTNT (233 aa).

It belongs to the ABC transporter superfamily. ABCG family. PDR (TC 3.A.1.205) subfamily.

It is found in the membrane. This Dictyostelium discoideum (Social amoeba) protein is ABC transporter G family member 9 (abcG9).